The primary structure comprises 612 residues: PAN2-PAN3 deadenylation complex subunit PAN3 (612 aa).

The C3H1-type zinc-finger motif lies at 10-39; that stretch reads WAKDTPCKNITIYGYCKYENDGCIFNHGKP. Positions 44 to 62 are enriched in low complexity; it reads SNTGGAAAGSAEDSAASGG. The disordered stretch occupies residues 44–64; that stretch reads SNTGGAAAGSAEDSAASGGVT. 2 consecutive short sequence motifs (PABPC-interacting motif-2 (PAM-2)) follow at residues 84-104 and 111-131; these read SVAI…IVSS and TAFT…SANV. The pseudokinase domain stretch occupies residues 231–481; that stretch reads QVFPSDGNLP…TIAEFTALFS (251 aa). ATP-binding positions include Arg286, 336–343, and 389–390; these read DYYPQSNS and DK. Residues 482–520 adopt a coiled-coil conformation; it reads HKMLDIISSSQTYSEYIEQHLSRELENGRLFRLMCKLNF. The tract at residues 521–612 is knob domain; it reads IFGRMESSMD…IDSTFRSMTQ (92 aa).

It belongs to the protein kinase superfamily. PAN3 family. In terms of assembly, homodimer. Forms a heterotrimer with a catalytic subunit PAN2 to form the poly(A)-nuclease (PAN) deadenylation complex. Interacts (via PAM-2 motif) with poly(A)-binding protein PAB1 (via PABC domain), conferring substrate specificity of the enzyme complex.

It localises to the cytoplasm. In terms of biological role, regulatory subunit of the poly(A)-nuclease (PAN) deadenylation complex, one of two cytoplasmic mRNA deadenylases involved in mRNA turnover. PAN specifically shortens poly(A) tails of RNA and the activity is stimulated by poly(A)-binding protein PAB1. PAN deadenylation is followed by rapid degradation of the shortened mRNA tails by the CCR4-NOT complex. Deadenylated mRNAs are then degraded by two alternative mechanisms, namely exosome-mediated 3'-5' exonucleolytic degradation, or deadenylation-dependent mRNA decaping and subsequent 5'-3' exonucleolytic degradation by XRN1. May also be involved in post-transcriptional maturation of mRNA poly(A) tails. PAN3 acts as a positive regulator for PAN activity, recruiting the catalytic subunit PAN2 to mRNA via its interaction with RNA and with PAB1. This chain is PAN2-PAN3 deadenylation complex subunit PAN3, found in Eremothecium gossypii (strain ATCC 10895 / CBS 109.51 / FGSC 9923 / NRRL Y-1056) (Yeast).